The sequence spans 633 residues: Chaperone protein HtpG (633 aa).

Positions 1–341 (MSATSSKETL…SADLPLNVSR (341 aa)) are a; substrate-binding. The interval 342 to 558 (EILQSSRDID…EGDMSANLER (217 aa)) is b. Residues 559-633 (LLKAAGQAAP…LNGLLAMLPG (75 aa)) form a c region.

It belongs to the heat shock protein 90 family. As to quaternary structure, homodimer.

It is found in the cytoplasm. Its function is as follows. Molecular chaperone. Has ATPase activity. The polypeptide is Chaperone protein HtpG (Thiobacillus denitrificans (strain ATCC 25259 / T1)).